The following is a 611-amino-acid chain: Rho-related BTB domain-containing protein 3 (611 aa).

Residues 1-175 are rho-like; the sequence is MSIHIVALGN…KELGATYLEL (175 aa). BTB domains lie at 254–356 and 420–487; these read VDVV…QWEE and ADVV…CPAG. An interaction with Rab9 region spans residues 420 to 611; that stretch reads ADVVFEIQGA…HSRKCRCLVM (192 aa).

As to quaternary structure, interacts with RAB9A and RAB9B (at lower level compared to RAB9A-binding). Interacts with M6PRBP1/TIP47.

The protein localises to the golgi apparatus. Its function is as follows. Rab9-regulated ATPase required for endosome to Golgi transport. Involved in transport vesicle docking at the Golgi complex, possibly by participating in release M6PRBP1/TIP47 from vesicles to permit their efficient docking and fusion at the Golgi. Specifically binds Rab9, but not other Rab proteins. Has low intrinsic ATPase activity due to autoinhibition, which is relieved by Rab9. This is Rho-related BTB domain-containing protein 3 (Rhobtb3) from Mus musculus (Mouse).